The sequence spans 456 residues: Aminotransferase ALD1, chloroplastic (456 aa).

The N-terminal 43 residues, Met1 to Asn43, are a transit peptide targeting the chloroplast. Residues Tyr108, Ala142 to Gln143, Asn223, Asp251, Tyr254, Ser281, Ser283, Arg292, and Asn323 each bind pyridoxal 5'-phosphate.

The protein belongs to the class-I pyridoxal-phosphate-dependent aminotransferase family. LL-diaminopimelate aminotransferase subfamily. Pyridoxal 5'-phosphate is required as a cofactor. Highly expressed in senescing leaves, flowers, siliques and seeds.

It localises to the plastid. Its subcellular location is the chloroplast. Its function is as follows. Aminotransferase involved in local and systemic acquired resistance (SAR) to the bacterial pathogen P.syringae. Required for salicylic acid (SA) and camalexin accumulation upon pathogen infection. Possesses aminotransferase activity in vitro and may generate amino-acid-derived defense signals in vivo. May be involved in ethylene-induced senescence signaling. Involved in the biosynthesis of pipecolate (Pip), a metabolite that orchestrates defense amplification, positive regulation of SA biosynthesis, and priming to guarantee effective local resistance induction and the establishment of SAR. Converts lysine to alpha-keto-epsilon-aminocaproate, which then can spontaneously cyclize to form delta-(1)-piperideine-2-carboxylate (P2C). P2C is converted to Pip by SARD4. May produce non-Pip metabolites that play roles in immunity. Involved in the synthesis of distinct metabolite signals that affect basal and early defenses, and later defense responses. In Arabidopsis thaliana (Mouse-ear cress), this protein is Aminotransferase ALD1, chloroplastic.